A 647-amino-acid polypeptide reads, in one-letter code: RalA-binding protein 1 (647 aa).

2 disordered regions span residues 1–151 and 163–186; these read MTEC…EKKC and WKEK…APSL. T2 bears the N-acetylthreonine mark. Residues 24–33 show a composition bias toward polar residues; sequence LTRTPSSEEI. A phosphoserine mark is found at S29, S30, and S34. At T44 the chain carries Phosphothreonine. Residues S48 and S62 each carry the phosphoserine modification. Residues 52 to 68 are compositionally biased toward basic and acidic residues; sequence DILHEPPDIVSDDEKDH. 69–74 contacts ATP; the sequence is GKKKGK. Basic residues predominate over residues 69–79; it reads GKKKGKFKKKE. Phosphoserine occurs at positions 92 and 93. Residues 102–118 show a composition bias toward basic residues; sequence KMKRSKGIHVFKKPSFS. A nuclear localization signal region spans residues 102–119; that stretch reads KMKRSKGIHVFKKPSFSK. A compositionally biased stretch (basic and acidic residues) spans 119–151; that stretch reads KKKEKDFKIKEKPKEEKHKEEKHKEEKHKEKKC. Positions 154-219 are mediates association with membranes and could form transmembrane domains; that stretch reads FTAADVVKQW…PAVFRECVDY (66 aa). The 189-residue stretch at 192–380 folds into the Rho-GAP domain; sequence APFADAVERT…VLLKQVTRPL (189 aa). The tract at residues 403–499 is mediates interaction with RALA and RALB; it reads RRQEFLLNCL…LTEQEELLAM (97 aa). 418 to 425 contributes to the ATP binding site; it reads GGIKDFSK. Phosphoserine occurs at positions 461 and 463. The mediates interaction with REPS1 and REPS2 stretch occupies residues 500–647; sequence EQFLRRQIAS…PSKDRKETPI (148 aa). Disordered regions lie at residues 525-550 and 601-647; these read QSRQ…DEEE and EQQL…ETPI. The segment covering 535–550 has biased composition (acidic residues); the sequence is EEYSSDSESESEDEEE. Residues 628–647 are compositionally biased toward basic and acidic residues; it reads RAAKEQAKPSPSKDRKETPI. Residue S637 is modified to Phosphoserine.

In terms of assembly, interacts with the GTP-bound form of RALA (via effector domain); during mitosis, recruits RALBP1 to the mitochondrion where it promotes DNM1L phosphorylation and mitochondrial fission. Interacts with DNM1L; mediates its mitotic kinase cyclin B-CDK1-mediated phosphorylation during mitosis to promote mitochondrial fission. Interacts with the mitotic kinase cyclin B-CDK1 during mitosis. Interacts with the GTP-bound form of RALB (via effector domain). Interacts with REPS1; the interaction is direct and does not affect RALA-binding nor GTPase activator activity of RALBP1. Interacts with REPS2; the interaction is direct and does not affect RALA-binding nor GTPase activator activity of RALBP1. Interacts with EPN1, NUMB and TFAP2A during interphase and mitosis. Interacts with AP2M1; as part of the AP2 complex. Interacts with CDC42. Interacts with RAC1. Tyrosine-phosphorylated upon stimulation of cells with EGF. In terms of processing, may undergo proteolytic cleavage to give peptides which reassemble to form a transporter complex. In terms of tissue distribution, ubiquitously expressed.

The protein resides in the cell membrane. It is found in the cytoplasm. Its subcellular location is the cytosol. The protein localises to the cytoskeleton. It localises to the spindle pole. The protein resides in the nucleus. It is found in the mitochondrion. It catalyses the reaction an S-substituted glutathione(in) + ATP + H2O = an S-substituted glutathione(out) + ADP + phosphate + H(+). The catalysed reaction is ATP + H2O + xenobioticSide 1 = ADP + phosphate + xenobioticSide 2.. The enzyme catalyses leukotriene C4(in) + ATP + H2O = leukotriene C4(out) + ADP + phosphate + H(+). Multifunctional protein that functions as a downstream effector of RALA and RALB. As a GTPase-activating protein/GAP can inactivate CDC42 and RAC1 by stimulating their GTPase activity. As part of the Ral signaling pathway, may also regulate ligand-dependent EGF and insulin receptors-mediated endocytosis. During mitosis, may act as a scaffold protein in the phosphorylation of EPSIN/EPN1 by the mitotic kinase cyclin B-CDK1, preventing endocytosis during that phase of the cell cycle. During mitosis, also controls mitochondrial fission as an effector of RALA. Recruited to mitochondrion by RALA, acts as a scaffold to foster the mitotic kinase cyclin B-CDK1-mediated phosphorylation and activation of DNM1L. Functionally, could also function as a primary ATP-dependent active transporter for glutathione conjugates of electrophiles. May also actively catalyze the efflux of a wide range of substrates including xenobiotics like doxorubicin (DOX) contributing to cell multidrug resistance. In Rattus norvegicus (Rat), this protein is RalA-binding protein 1.